A 173-amino-acid chain; its full sequence is Small ribosomal subunit protein uS13 (173 aa).

Residues Gly-130–Arg-143 show a composition bias toward basic residues. Residues Gly-130–Gly-155 are disordered.

It belongs to the universal ribosomal protein uS13 family. Part of the 30S ribosomal subunit. Forms a loose heterodimer with protein S19. Forms two bridges to the 50S subunit in the 70S ribosome.

In terms of biological role, located at the top of the head of the 30S subunit, it contacts several helices of the 16S rRNA. In the 70S ribosome it contacts the 23S rRNA (bridge B1a) and protein L5 of the 50S subunit (bridge B1b), connecting the 2 subunits; these bridges are implicated in subunit movement. The chain is Small ribosomal subunit protein uS13 from Haloquadratum walsbyi (strain DSM 16790 / HBSQ001).